The following is a 295-amino-acid chain: Tyrosine recombinase XerC (295 aa).

The 85-residue stretch at 1-85 folds into the Core-binding (CB) domain; the sequence is MQTYLQKYWN…ALRQFLAFLV (85 aa). The region spanning 106–285 is the Tyr recombinase domain; the sequence is HLPKNINAEQ…NFQHLAEVYD (180 aa). Catalysis depends on residues Arg-145, Lys-169, His-237, Arg-240, and His-263. Residue Tyr-272 is the O-(3'-phospho-DNA)-tyrosine intermediate of the active site.

It belongs to the 'phage' integrase family. XerC subfamily. In terms of assembly, forms a cyclic heterotetrameric complex composed of two molecules of XerC and two molecules of XerD.

It localises to the cytoplasm. Site-specific tyrosine recombinase, which acts by catalyzing the cutting and rejoining of the recombining DNA molecules. The XerC-XerD complex is essential to convert dimers of the bacterial chromosome into monomers to permit their segregation at cell division. It also contributes to the segregational stability of plasmids. The sequence is that of Tyrosine recombinase XerC from Mannheimia succiniciproducens (strain KCTC 0769BP / MBEL55E).